A 443-amino-acid chain; its full sequence is FLYWCH-type zinc finger-containing protein peb-1 (443 aa).

The disordered stretch occupies residues 22–49 (KPGSSDISSSSTDTSAISPISVSSMPLS). Residues 25–42 (SSDISSSSTDTSAISPIS) are compositionally biased toward low complexity. The required for DNA-binding DNA-binding region spans 46–203 (MPLSPDKEKK…RNKDGKPKKP (158 aa)). The FLYWCH-type zinc-finger motif lies at 69–135 (IVTSFKGYQK…NACTKGSHNH (67 aa)). The disordered stretch occupies residues 251–271 (PTIQIPQPIPTPIQHQQQEQS).

It localises to the nucleus. Its function is as follows. Putative transcription factor. Binds to specific sequence motif 5'-[TC][AGT]TGCC[GA][AT]-3' in regulatory elements of target genes such as myosin myo-2. May modulate gene expression, perhaps acting in opposition to transcription factor pha-4. Involved in morphogenesis, perhaps especially in formation of the pharynx. Plays roles in molting, feeding and morphology. This chain is FLYWCH-type zinc finger-containing protein peb-1, found in Caenorhabditis elegans.